Reading from the N-terminus, the 1052-residue chain is Ubiquitin-like modifier-activating enzyme 6 (1052 aa).

An N-acetylmethionine modification is found at methionine 1. The disordered stretch occupies residues 1 to 21; the sequence is MEGSEPVAAHQGEEASCSSWG. ATP is bound at residue arginine 46. At threonine 54 the chain carries Phosphothreonine. Serine 301 carries the post-translational modification Phosphoserine. The ATP site is built by alanine 470 and aspartate 497. Mg(2+)-binding residues include aspartate 499 and glutamate 502. 4 residues coordinate ATP: asparagine 505, arginine 508, glutamine 509, and lysine 521. Lysine 544 is modified (N6-acetyllysine). Valine 545 lines the ATP pocket. Aspartate 569 is a binding site for Mg(2+). Asparagine 570 contacts ATP. The active-site Glycyl thioester intermediate is cysteine 625. Residue lysine 729 is modified to N6-acetyllysine. At serine 737 the chain carries Phosphoserine.

Belongs to the ubiquitin-activating E1 family. As to quaternary structure, forms a thioester with UBD in cells stimulated with tumor necrosis factor-alpha (TNFa) and interferon-gamma (IFNg). As to expression, widely expressed. Isoform 2 is predominantly expressed in testis with higher expression in adult testis than in fetal testis.

It carries out the reaction ATP + ubiquitin + [E1 ubiquitin-activating enzyme]-L-cysteine = AMP + diphosphate + S-ubiquitinyl-[E1 ubiquitin-activating enzyme]-L-cysteine.. The protein operates within protein modification; protein ubiquitination. In terms of biological role, activates ubiquitin by first adenylating its C-terminal glycine residue with ATP, and thereafter linking this residue to the side chain of a cysteine residue in E1, yielding a ubiquitin-E1 thioester and free AMP. Specific for ubiquitin, does not activate ubiquitin-like peptides. Also activates UBD/FAT10 conjugation via adenylation of its C-terminal glycine. Differs from UBE1 in its specificity for substrate E2 charging. Does not charge cell cycle E2s, such as CDC34. Essential for embryonic development. Isoform 2 may play a key role in ubiquitin system and may influence spermatogenesis and male fertility. This Homo sapiens (Human) protein is Ubiquitin-like modifier-activating enzyme 6 (UBA6).